The primary structure comprises 406 residues: Type IV pilus assembly protein PilC (406 aa).

4 helical membrane-spanning segments follow: residues 69 to 91 (IFSRQLATMLGAGLTLLQALAIL), 171 to 191 (YPVIVFVFAVGVAYFLLTGIV), 211 to 231 (FLIAVSDLLRAATLPLLLLAV), and 377 to 397 (MIIFLGVIVGMIVAGMFLPLF).

The protein belongs to the GSP F family. As to quaternary structure, homotetramer. Interacts with PilB.

It localises to the cell inner membrane. In terms of biological role, essential inner membrane component of the type IV pilus (T4P) that plays a role in surface and host cell adhesion, colonization, biofilm maturation, virulence, and twitching, a form of surface-associated motility facilitated by cycles of extension, adhesion, and retraction of T4P fibers. Controls both pilus assembly and disassembly and plays an important role in PilB localization to the complex and ATPase activity. This Thermus thermophilus (strain ATCC 27634 / DSM 579 / HB8) protein is Type IV pilus assembly protein PilC.